A 2259-amino-acid polypeptide reads, in one-letter code: Putative Polycomb group protein ASXL3 (2259 aa).

Residues 10-83 (RTWAEAARLA…KSGLYALRKE (74 aa)) enclose the HTH HARE-type domain. The segment at 181-230 (VVLTPLKVSDEQSDSPSGSESKNGEADSSDKEMKHGQKSPTGKQTSQHLK) is disordered. Over residues 202–215 (KNGEADSSDKEMKH) the composition is skewed to basic and acidic residues. Residues 218-227 (KSPTGKQTSQ) are compositionally biased toward polar residues. The DEUBAD domain maps to 253 to 362 (PGSILVNTNL…FERFYGERSG (110 aa)). Disordered stretches follow at residues 364–399 (SREE…AQNA), 607–643 (CISE…CTPA), 703–810 (EASP…IPEP), 857–1012 (SEMT…PLKI), 1025–1049 (SQPV…NTGA), 1126–1150 (RLPS…TKME), 1433–1462 (LSGE…GGFV), 1614–1643 (DPMR…GLKA), 1687–1719 (DFPG…TTSP), and 1993–2075 (NMLS…TTKR). Polar residues-rich tracts occupy residues 607–617 (CISETSFSSES), 630–643 (GETQ…CTPA), and 703–717 (EASP…SEAS). Residues 722–741 (LPPTSETSSESSMPLTSETP) show a composition bias toward low complexity. Composition is skewed to polar residues over residues 770–781 (KSPSGSEEANSP) and 926–945 (QSST…SEPS). Composition is skewed to basic and acidic residues over residues 949-985 (DGIR…DDQS) and 995-1006 (PEKEQPPREEPR). Low complexity predominate over residues 1034 to 1043 (RASTSTSVSS). The span at 1437–1448 (NLDNNSGPLNRT) shows a compositional bias: polar residues. Over residues 1699–1719 (EVTSSASVQPTQTMKPSTTSP) the composition is skewed to polar residues. Pro residues predominate over residues 2023-2055 (PLPPPPPPPPPPPPPLALPPPPPPPPPLPPPLP). The PHD-type; atypical zinc finger occupies 2221-2258 (ELKCSCRLKAMIVCKGCGAFCHDDCIGPSKLCVACLVV).

The protein belongs to the Asx family. As to quaternary structure, core component of the polycomb repressive deubiquitinase (PR-DUB) complex, at least composed of BAP1, one of ASXL1, ASXL2 or (probably) ASXL3, and one of MBD5 or MBD6. Distinct combinations of ASXL and MBD proteins may preferentially bind specific histone modification marks. The PR-DUB core associates with a number of accessory proteins, including FOXK1, FOXK2, KDM1B, HCFC1 and OGT; KDM1B specifically associates with ASXL2 PR-DUB complexes. Interacts (via PHD domain) with MBD5 and MBD6 (via MBD domain); the interaction is probably direct and mediates association of MBD proteins with the PR-DUB core.

The protein resides in the nucleus. Putative Polycomb group (PcG) protein. PcG proteins act by forming multiprotein complexes, which are required to maintain the transcriptionally repressive state of homeotic genes throughout development. PcG proteins are not required to initiate repression, but to maintain it during later stages of development. They probably act via methylation of histones, rendering chromatin heritably changed in its expressibility. Non-catalytic component of the PR-DUB complex, a complex that specifically mediates deubiquitination of histone H2A monoubiquitinated at 'Lys-119' (H2AK119ub1). The PR-DUB complex is an epigenetic regulator of gene expression and acts as a transcriptional coactivator, affecting genes involved in development, cell communication, signaling, cell proliferation and cell viability. ASXL1, ASXL2 and ASXL3 function redundantly in the PR-DUB complex and are essential for chromatin recruitment and transcriptional activation of associated genes. The chain is Putative Polycomb group protein ASXL3 (Asxl3) from Mus musculus (Mouse).